The sequence spans 884 residues: uncharacterized protein (884 aa).

This is an uncharacterized protein from Mycobacterium tuberculosis (strain ATCC 25618 / H37Rv).